A 440-amino-acid chain; its full sequence is D-serine dehydratase (440 aa).

Residue Lys116 is modified to N6-(pyridoxal phosphate)lysine.

This sequence belongs to the serine/threonine dehydratase family. DsdA subfamily. In terms of assembly, monomer. Requires pyridoxal 5'-phosphate as cofactor.

It catalyses the reaction D-serine = pyruvate + NH4(+). In Salmonella typhimurium (strain LT2 / SGSC1412 / ATCC 700720), this protein is D-serine dehydratase.